A 309-amino-acid chain; its full sequence is Ribokinase (309 aa).

Substrate-binding positions include 14 to 16 (NAD), 42 to 46 (GKGAN), and Glu143. Residues Asn187 and 223-228 (TLGSRG) contribute to the ATP site. The K(+) site is built by Asp249 and Ile251. ATP-binding positions include 254–255 (GD) and His279. Asp255 is a binding site for substrate. The Proton acceptor role is filled by Asp255. 4 residues coordinate K(+): Ala285, Arg288, Gly290, and Ser294.

Belongs to the carbohydrate kinase PfkB family. Ribokinase subfamily. As to quaternary structure, homodimer. The cofactor is Mg(2+).

Its subcellular location is the cytoplasm. The catalysed reaction is D-ribose + ATP = D-ribose 5-phosphate + ADP + H(+). The protein operates within carbohydrate metabolism; D-ribose degradation; D-ribose 5-phosphate from beta-D-ribopyranose: step 2/2. Its activity is regulated as follows. Activated by a monovalent cation that binds near, but not in, the active site. The most likely occupant of the site in vivo is potassium. Ion binding induces a conformational change that may alter substrate affinity. Catalyzes the phosphorylation of ribose at O-5 in a reaction requiring ATP and magnesium. The resulting D-ribose-5-phosphate can then be used either for sythesis of nucleotides, histidine, and tryptophan, or as a component of the pentose phosphate pathway. In Escherichia coli O157:H7, this protein is Ribokinase.